The chain runs to 259 residues: Type III pantothenate kinase (259 aa).

6–13 serves as a coordination point for ATP; the sequence is DVGNTNCT. 107-110 is a substrate binding site; it reads GSDR. Aspartate 109 acts as the Proton acceptor in catalysis. Aspartate 129 is a binding site for K(+). Threonine 132 contributes to the ATP binding site. Substrate is bound at residue threonine 184.

Belongs to the type III pantothenate kinase family. As to quaternary structure, homodimer. The cofactor is NH4(+). K(+) serves as cofactor.

Its subcellular location is the cytoplasm. It catalyses the reaction (R)-pantothenate + ATP = (R)-4'-phosphopantothenate + ADP + H(+). The protein operates within cofactor biosynthesis; coenzyme A biosynthesis; CoA from (R)-pantothenate: step 1/5. Catalyzes the phosphorylation of pantothenate (Pan), the first step in CoA biosynthesis. The sequence is that of Type III pantothenate kinase from Listeria monocytogenes serovar 1/2a (strain ATCC BAA-679 / EGD-e).